Here is a 300-residue protein sequence, read N- to C-terminus: MILLEVNNRIIEEILTLKFENAAAGNKPEVVEVTFADFDGVLYHVSNPNGDKAKVMISISLKFYKELQEHGADEVLKNVYGNFLVAPESGYNVSLLYDLEALPSNKDSVIHQAGMLKRNCFASVFEKYFKFQEEGKEGEKRAVIHYREDETMYVEAKKDRVTVVFSTVFKDDDDVVIGKVFMQEFKEGRRASHTAPQVLFSHREPPLELKDTDAAVGDNIGYITFVLFPRHTSANARDNTINLIHTFRDYLHYHIKCSKAYIHTRMRAKTSDFLKVLNRARPDAEKKEMKTITGKTFAAR.

The protein belongs to the ARPC2 family. Component of the Arp2/3 complex composed of actr2/arp2, actr3/arp3, arpc1 (arpc1a or arpc1b), arpc2, arpc3, arpc4 and arpc5.

The protein resides in the cytoplasm. Its subcellular location is the cytoskeleton. It is found in the cell projection. It localises to the nucleus. Actin-binding component of the Arp2/3 complex, a multiprotein complex that mediates actin polymerization upon stimulation by nucleation-promoting factor (NPF). The Arp2/3 complex mediates the formation of branched actin networks in the cytoplasm, providing the force for cell motility. In addition to its role in the cytoplasmic cytoskeleton, the Arp2/3 complex also promotes actin polymerization in the nucleus, thereby regulating gene transcription and repair of damaged DNA. The Arp2/3 complex promotes homologous recombination (HR) repair in response to DNA damage by promoting nuclear actin polymerization, leading to drive motility of double-strand breaks (DSBs). In Xenopus laevis (African clawed frog), this protein is Actin-related protein 2/3 complex subunit 2-B (arpc2-b).